The chain runs to 72 residues: Translation initiation factor IF-1 (72 aa).

The S1-like domain occupies 1-72 (MSKEDHIEME…SKARITFRHR (72 aa)).

Belongs to the IF-1 family. Component of the 30S ribosomal translation pre-initiation complex which assembles on the 30S ribosome in the order IF-2 and IF-3, IF-1 and N-formylmethionyl-tRNA(fMet); mRNA recruitment can occur at any time during PIC assembly.

It localises to the cytoplasm. Functionally, one of the essential components for the initiation of protein synthesis. Stabilizes the binding of IF-2 and IF-3 on the 30S subunit to which N-formylmethionyl-tRNA(fMet) subsequently binds. Helps modulate mRNA selection, yielding the 30S pre-initiation complex (PIC). Upon addition of the 50S ribosomal subunit IF-1, IF-2 and IF-3 are released leaving the mature 70S translation initiation complex. This Methylococcus capsulatus (strain ATCC 33009 / NCIMB 11132 / Bath) protein is Translation initiation factor IF-1.